Reading from the N-terminus, the 1089-residue chain is Pentatricopeptide repeat-containing protein MRL1, chloroplastic (1089 aa).

Residues M1–R72 constitute a chloroplast transit peptide. PPR repeat units follow at residues T466 to A500, D501 to A535, N536 to P570, D571 to I605, D608 to G642, T643 to P677, D678 to L712, G713 to P747, T748 to P782, and N783 to P817.

The protein belongs to the PPR family. P subfamily. In terms of tissue distribution, expressed in stems, leaves and sepals.

It is found in the plastid. The protein localises to the chloroplast. Its function is as follows. Regulator of the large subunit (LS) of RuBisCO. Involved either in the processing or in the stabilization of the processed transcript, probably by acting as a barrier to the 5'&gt;3' degradation. The sequence is that of Pentatricopeptide repeat-containing protein MRL1, chloroplastic (MRL1) from Arabidopsis thaliana (Mouse-ear cress).